Here is a 123-residue protein sequence, read N- to C-terminus: Immunoglobulin lambda variable 5-45 (123 aa).

A signal peptide spans 1-19; that stretch reads MAWTPLLLLFLSHCTGSLS. The framework-1 stretch occupies residues 20–44; it reads QAVLTQPSSLSASPGASASLTCTLC. The Ig-like domain maps to 20-123; that stretch reads QAVLTQPSSL…YCMIWHSSAS (104 aa). Cysteine 41 and cysteine 115 are disulfide-bonded. The complementarity-determining-1 stretch occupies residues 45-53; sequence SGINVGTYR. Residues 54-70 are framework-2; that stretch reads IYWYQQKPGSPPQYLLR. A disordered region spans residues 68 to 92; sequence LLRYKSDSDKQQGSGVPSRFSGSKD. Positions 71 to 77 are complementarity-determining-2; the sequence is YKSDSDK. Residues 78 to 92 are compositionally biased toward polar residues; the sequence is QQGSGVPSRFSGSKD. Residues 78-115 form a framework-3 region; sequence QQGSGVPSRFSGSKDASANAGILLISGLQSEDEADYYC. The tract at residues 116–123 is complementarity-determining-3; the sequence is MIWHSSAS.

As to quaternary structure, immunoglobulins are composed of two identical heavy chains and two identical light chains; disulfide-linked.

Its subcellular location is the secreted. It is found in the cell membrane. Its function is as follows. V region of the variable domain of immunoglobulin light chains that participates in the antigen recognition. Immunoglobulins, also known as antibodies, are membrane-bound or secreted glycoproteins produced by B lymphocytes. In the recognition phase of humoral immunity, the membrane-bound immunoglobulins serve as receptors which, upon binding of a specific antigen, trigger the clonal expansion and differentiation of B lymphocytes into immunoglobulins-secreting plasma cells. Secreted immunoglobulins mediate the effector phase of humoral immunity, which results in the elimination of bound antigens. The antigen binding site is formed by the variable domain of one heavy chain, together with that of its associated light chain. Thus, each immunoglobulin has two antigen binding sites with remarkable affinity for a particular antigen. The variable domains are assembled by a process called V-(D)-J rearrangement and can then be subjected to somatic hypermutations which, after exposure to antigen and selection, allow affinity maturation for a particular antigen. This chain is Immunoglobulin lambda variable 5-45, found in Homo sapiens (Human).